Here is a 255-residue protein sequence, read N- to C-terminus: 4-hydroxy-tetrahydrodipicolinate reductase (255 aa).

NAD(+)-binding positions include 8–13 (GATGRV), 88–90 (GTT), and 112–115 (ATNM). The active-site Proton donor/acceptor is the histidine 144. Histidine 145 provides a ligand contact to (S)-2,3,4,5-tetrahydrodipicolinate. The active-site Proton donor is lysine 148. 154-155 (GT) contacts (S)-2,3,4,5-tetrahydrodipicolinate.

This sequence belongs to the DapB family.

The protein resides in the cytoplasm. It catalyses the reaction (S)-2,3,4,5-tetrahydrodipicolinate + NAD(+) + H2O = (2S,4S)-4-hydroxy-2,3,4,5-tetrahydrodipicolinate + NADH + H(+). It carries out the reaction (S)-2,3,4,5-tetrahydrodipicolinate + NADP(+) + H2O = (2S,4S)-4-hydroxy-2,3,4,5-tetrahydrodipicolinate + NADPH + H(+). It participates in amino-acid biosynthesis; L-lysine biosynthesis via DAP pathway; (S)-tetrahydrodipicolinate from L-aspartate: step 4/4. In terms of biological role, catalyzes the conversion of 4-hydroxy-tetrahydrodipicolinate (HTPA) to tetrahydrodipicolinate. This Helicobacter hepaticus (strain ATCC 51449 / 3B1) protein is 4-hydroxy-tetrahydrodipicolinate reductase.